Reading from the N-terminus, the 316-residue chain is Acetaldehyde dehydrogenase (316 aa).

An NAD(+)-binding site is contributed by 12 to 15 (SGNI). The Acyl-thioester intermediate role is filled by C132. Residues 163–171 (SAGPGTRAN) and N289 contribute to the NAD(+) site.

Belongs to the acetaldehyde dehydrogenase family.

It carries out the reaction acetaldehyde + NAD(+) + CoA = acetyl-CoA + NADH + H(+). This is Acetaldehyde dehydrogenase (bphG) from Bordetella avium (strain 197N).